A 183-amino-acid polypeptide reads, in one-letter code: TATA box-binding protein-like 1 (183 aa).

This sequence belongs to the TBP family. As to quaternary structure, binds TFIIA and TFIIB. Present in the brain, heart, liver and gizzard.

It is found in the cytoplasm. Its subcellular location is the nucleus. In terms of biological role, part of a specialized transcription system that mediates the transcription of most ribosomal proteins through the 5'-TCT-3' motif which is a core promoter element at these genes. Seems to also mediate the transcription of NF1. Does not bind the TATA box. The polypeptide is TATA box-binding protein-like 1 (TBPL1) (Gallus gallus (Chicken)).